The chain runs to 334 residues: Transaldolase (334 aa).

Lysine 136 (schiff-base intermediate with substrate) is an active-site residue.

This sequence belongs to the transaldolase family. Type 1 subfamily. In terms of assembly, homodimer.

The protein localises to the cytoplasm. It carries out the reaction D-sedoheptulose 7-phosphate + D-glyceraldehyde 3-phosphate = D-erythrose 4-phosphate + beta-D-fructose 6-phosphate. It functions in the pathway carbohydrate degradation; pentose phosphate pathway; D-glyceraldehyde 3-phosphate and beta-D-fructose 6-phosphate from D-ribose 5-phosphate and D-xylulose 5-phosphate (non-oxidative stage): step 2/3. Transaldolase is important for the balance of metabolites in the pentose-phosphate pathway. This chain is Transaldolase, found in Nostoc punctiforme (strain ATCC 29133 / PCC 73102).